Consider the following 810-residue polypeptide: Phenylalanine--tRNA ligase beta subunit (810 aa).

The tRNA-binding domain occupies 39–150 (RTWANGVVVG…ENLPLGSDVR (112 aa)). The 85-residue stretch at 411–495 (TWSRSIFLRL…RLYGYDNFCD (85 aa)) folds into the B5 domain. The Mg(2+) site is built by aspartate 473, aspartate 479, glutamate 482, and glutamate 483. Residues 716 to 809 (STYPASDRDI…LVEKFGVNLR (94 aa)) enclose the FDX-ACB domain.

The protein belongs to the phenylalanyl-tRNA synthetase beta subunit family. Type 1 subfamily. As to quaternary structure, tetramer of two alpha and two beta subunits. The cofactor is Mg(2+).

It localises to the cytoplasm. The catalysed reaction is tRNA(Phe) + L-phenylalanine + ATP = L-phenylalanyl-tRNA(Phe) + AMP + diphosphate + H(+). This is Phenylalanine--tRNA ligase beta subunit from Trichormus variabilis (strain ATCC 29413 / PCC 7937) (Anabaena variabilis).